A 298-amino-acid chain; its full sequence is Nucleotide-binding protein GK3066 (298 aa).

17-24 (GMSGAGKT) provides a ligand contact to ATP. 68-71 (DLRS) is a binding site for GTP.

This sequence belongs to the RapZ-like family.

Displays ATPase and GTPase activities. The polypeptide is Nucleotide-binding protein GK3066 (Geobacillus kaustophilus (strain HTA426)).